Here is a 417-residue protein sequence, read N- to C-terminus: Gamma-glutamyl phosphate reductase (417 aa).

It belongs to the gamma-glutamyl phosphate reductase family.

It localises to the cytoplasm. It carries out the reaction L-glutamate 5-semialdehyde + phosphate + NADP(+) = L-glutamyl 5-phosphate + NADPH + H(+). The protein operates within amino-acid biosynthesis; L-proline biosynthesis; L-glutamate 5-semialdehyde from L-glutamate: step 2/2. In terms of biological role, catalyzes the NADPH-dependent reduction of L-glutamate 5-phosphate into L-glutamate 5-semialdehyde and phosphate. The product spontaneously undergoes cyclization to form 1-pyrroline-5-carboxylate. The sequence is that of Gamma-glutamyl phosphate reductase from Hydrogenovibrio crunogenus (strain DSM 25203 / XCL-2) (Thiomicrospira crunogena).